We begin with the raw amino-acid sequence, 369 residues long: MANVHHISVPSKVLFQKARKLVPPMLEKFHKGQQGRVAVIGGSLDYTGAPYFSAMASARLGCDLSHVICESSAATVIKSYSPNLMVHPILPSSASVKDPSSIDAPSLASPIIAMLGRLHALVIGPGLGRDGVTLKVVTEVMKEARSRSIPFVLDADGLLLVTENPDLVKGYKDCILTPNVNEFSRLAKALNIEVPSLAQISSKESGDKTSKEAEACEKLSQALGGVTIIQKGPHDVISNGVTSIVSDLPGGLKRSGGQGDTLTGSLGTLLAWRAAYHDALWDSGEQEHSKEAENKEEVQGELESNKRMSPSTTLLLAAWAGAAITRECSRRAFKAKGRSMQASDLTDEVHESFLTLIGEPEGSKVPERL.

Positions 14–356 constitute a YjeF C-terminal domain; it reads LFQKARKLVP…DEVHESFLTL (343 aa). Residues G126 and 179–185 contribute to the (6S)-NADPHX site; that span reads NVNEFSR. ATP contacts are provided by residues 231 to 235 and 250 to 259; these read KGPHD and GGLKRSGGQG. D260 serves as a coordination point for (6S)-NADPHX. A compositionally biased stretch (basic and acidic residues) spans 284–306; it reads GEQEHSKEAENKEEVQGELESNK. The tract at residues 284 to 307 is disordered; the sequence is GEQEHSKEAENKEEVQGELESNKR.

Belongs to the NnrD/CARKD family. The cofactor is Mg(2+).

The protein resides in the cytoplasm. It carries out the reaction (6S)-NADHX + ATP = ADP + phosphate + NADH + H(+). The catalysed reaction is (6S)-NADPHX + ATP = ADP + phosphate + NADPH + H(+). In terms of biological role, catalyzes the dehydration of the S-form of NAD(P)HX at the expense of ATP, which is converted to ADP. Together with NAD(P)HX epimerase, which catalyzes the epimerization of the S- and R-forms, the enzyme allows the repair of both epimers of NAD(P)HX, a damaged form of NAD(P)H that is a result of enzymatic or heat-dependent hydration. This is ATP-dependent (S)-NAD(P)H-hydrate dehydratase from Emericella nidulans (strain FGSC A4 / ATCC 38163 / CBS 112.46 / NRRL 194 / M139) (Aspergillus nidulans).